Here is a 101-residue protein sequence, read N- to C-terminus: CRISPR-associated endoribonuclease Cas2 (101 aa).

Aspartate 17 provides a ligand contact to Mg(2+).

It belongs to the CRISPR-associated endoribonuclease Cas2 protein family. As to quaternary structure, homodimer, forms a heterotetramer with a Cas1 homodimer. Mg(2+) is required as a cofactor.

Functionally, CRISPR (clustered regularly interspaced short palindromic repeat), is an adaptive immune system that provides protection against mobile genetic elements (viruses, transposable elements and conjugative plasmids). CRISPR clusters contain sequences complementary to antecedent mobile elements and target invading nucleic acids. CRISPR clusters are transcribed and processed into CRISPR RNA (crRNA). Functions as a ssRNA-specific endoribonuclease. Involved in the integration of spacer DNA into the CRISPR cassette. In Methanopyrus kandleri (strain AV19 / DSM 6324 / JCM 9639 / NBRC 100938), this protein is CRISPR-associated endoribonuclease Cas2.